A 492-amino-acid chain; its full sequence is MLAVTLLSLALLGSTCACSTSTSYEAGIVCRITKAALLVLNQETAKVIQTAFQRASYPDIKGERSMMLLGRVTYGLHNIQISHLSIASSQVELVEAKSVDVSIQNASVIFKGTLNYGYKGAWGLNIEQSVDFEIESAIDLQINTKLTCDSGHVRTDAPDCSISFHKLLLHLQGEREPGWTKQLFTNIISFTLKMVLKGQVCKEINVISNIMADFVQTRAANIISDRDIEVDISLTRSPIITATYLESHHKGHFIYKNISEVLPLPAFSPTLLGDTRMLYFWFSEQVLDSLAKAAFQDGRLQLNLAETELKVVLETWHFNPNQEIIPEVITGFPSPGQVTVHCPRRPTISCQNKGVVVSSPVVMEFLFPHKDGQDSVTHTFEEDIVATIQASYSKKKLFLSLVDFQIKPKTTSNMAESSESIQNFLQLMITTVGIPEIMSRLEVALTTLMNSKGLDLFDIINPEIITRDGFLLLQMDFGFPEHLLVDFLQSLN.

The first 17 residues, 1-17 (MLAVTLLSLALLGSTCA), serve as a signal peptide directing secretion. The cysteines at positions 160 and 201 are disulfide-linked. Asparagine 257 is a glycosylation site (N-linked (GlcNAc...) asparagine).

This sequence belongs to the BPI/LBP/Plunc superfamily. BPI/LBP family.

It localises to the secreted. It carries out the reaction cholesteryl (9Z-octadecenoate)(in) = cholesteryl (9Z-octadecenoate)(out). The enzyme catalyses 1,2,3-tri-(9Z-octadecenoyl)-glycerol(in) = 1,2,3-tri-(9Z-octadecenoyl)-glycerol(out). It catalyses the reaction cholesteryl (9Z,12Z)-octadecadienoate(in) = cholesteryl (9Z,12Z)-octadecadienoate(out). Involved in the transfer of neutral lipids, including cholesteryl ester and triglyceride, among lipoprotein particles. Allows the net movement of cholesteryl ester from high density lipoproteins/HDL to triglyceride-rich very low density lipoproteins/VLDL, and the equimolar transport of triglyceride from VLDL to HDL. Regulates the reverse cholesterol transport, by which excess cholesterol is removed from peripheral tissues and returned to the liver for elimination. This is Cholesteryl ester transfer protein from Cricetulus griseus (Chinese hamster).